The primary structure comprises 96 residues: MPPPRGKGRFGKDKRPKRNTQSLLFRRKRFCRFTVTGVTEIDYKDVDTLRDFIAENGKITPARLTGTRAFFQRQLSTCIKRARFLALLPYSDQHKS.

Residues 1–18 (MPPPRGKGRFGKDKRPKR) show a composition bias toward basic residues. Residues 1–21 (MPPPRGKGRFGKDKRPKRNTQ) form a disordered region.

This sequence belongs to the bacterial ribosomal protein bS18 family. As to quaternary structure, part of the 30S ribosomal subunit. Forms a tight heterodimer with protein bS6.

In terms of biological role, binds as a heterodimer with protein bS6 to the central domain of the 16S rRNA, where it helps stabilize the platform of the 30S subunit. The chain is Small ribosomal subunit protein bS18 from Methylibium petroleiphilum (strain ATCC BAA-1232 / LMG 22953 / PM1).